The sequence spans 202 residues: dITP/XTP pyrophosphatase (202 aa).

Substrate is bound at residue 9–14 (TGNKGK). Aspartate 73 functions as the Proton acceptor in the catalytic mechanism. A Mg(2+)-binding site is contributed by aspartate 73. Substrate-binding positions include serine 74, 158–161 (FGYD), lysine 181, and 186–187 (HR).

This sequence belongs to the HAM1 NTPase family. In terms of assembly, homodimer. Requires Mg(2+) as cofactor.

It carries out the reaction XTP + H2O = XMP + diphosphate + H(+). It catalyses the reaction dITP + H2O = dIMP + diphosphate + H(+). The catalysed reaction is ITP + H2O = IMP + diphosphate + H(+). Its function is as follows. Pyrophosphatase that catalyzes the hydrolysis of nucleoside triphosphates to their monophosphate derivatives, with a high preference for the non-canonical purine nucleotides XTP (xanthosine triphosphate), dITP (deoxyinosine triphosphate) and ITP. Seems to function as a house-cleaning enzyme that removes non-canonical purine nucleotides from the nucleotide pool, thus preventing their incorporation into DNA/RNA and avoiding chromosomal lesions. This chain is dITP/XTP pyrophosphatase, found in Lactobacillus acidophilus (strain ATCC 700396 / NCK56 / N2 / NCFM).